We begin with the raw amino-acid sequence, 78 residues long: NAD(P)H-quinone oxidoreductase subunit O (78 aa).

This sequence belongs to the complex I NdhO subunit family. In terms of assembly, NDH-1 can be composed of about 15 different subunits; different subcomplexes with different compositions have been identified which probably have different functions.

It is found in the cellular thylakoid membrane. The catalysed reaction is a plastoquinone + NADH + (n+1) H(+)(in) = a plastoquinol + NAD(+) + n H(+)(out). It carries out the reaction a plastoquinone + NADPH + (n+1) H(+)(in) = a plastoquinol + NADP(+) + n H(+)(out). Functionally, NDH-1 shuttles electrons from an unknown electron donor, via FMN and iron-sulfur (Fe-S) centers, to quinones in the respiratory and/or the photosynthetic chain. The immediate electron acceptor for the enzyme in this species is believed to be plastoquinone. Couples the redox reaction to proton translocation, and thus conserves the redox energy in a proton gradient. Cyanobacterial NDH-1 also plays a role in inorganic carbon-concentration. The protein is NAD(P)H-quinone oxidoreductase subunit O of Prochlorococcus marinus (strain MIT 9301).